The following is a 348-amino-acid chain: Protein RecA (348 aa).

Position 66–73 (66–73) interacts with ATP; that stretch reads GPESSGKT.

Belongs to the RecA family.

It localises to the cytoplasm. Functionally, can catalyze the hydrolysis of ATP in the presence of single-stranded DNA, the ATP-dependent uptake of single-stranded DNA by duplex DNA, and the ATP-dependent hybridization of homologous single-stranded DNAs. It interacts with LexA causing its activation and leading to its autocatalytic cleavage. In Neisseria meningitidis serogroup A / serotype 4A (strain DSM 15465 / Z2491), this protein is Protein RecA.